Reading from the N-terminus, the 3295-residue chain is Toxin CdiA (3295 aa).

Positions 33–366 (PSSGVGHTQR…GKGNTQLTTA (334 aa)) are two-partner system transport domain (TPS). The chain crosses the membrane as a helical span at residues 55-75 (LLIALGCISLSAQAAIVADGS). Positions 353 to 1574 (GVLYGKGNTQ…LLVYAKTLTN (1222 aa)) are FHA-1. Positions 1165–1185 (PPSSIPPSSTQSSSTQASASP) are disordered. The interval 1575–1796 (RRQILTATTD…LKTDKGDYAP (222 aa)) is receptor binding domain (RBD). The interval 1797–1977 (GPEAALSLAN…GVKPGDLRAN (181 aa)) is YP domain. Positions 1806 to 1831 (NISPPSSLDATGPRGVPPPSDDLNRT) are disordered. The interval 1998 to 2035 (GAISASNNLQISMAKDITLNNRCGLLQAGNHLQLSTLN) is periplasmic FHA-1 repeat (pFR). The segment at 2022–2676 (LLQAGNHLQL…DRDNYDAKQS (655 aa)) is FHA-2. Disordered stretches follow at residues 2260–2292 (TSQTEQHDEQRNHTGTKKGLLSSTTTRSEEGRS) and 2823–2847 (QQNVDDLSRDTGNANGSIGPIFDKE). Positions 2823 to 2838 (QQNVDDLSRDTGNANG) are enriched in polar residues. Positions 3073 to 3076 (VENN) match the VENN CT cleavage motif motif. The segment at 3073-3295 (VENNLLGGNE…QKKDAMEDSK (223 aa)) is CT domain. Residues 3276-3295 (SSEFGSSLIQQKKDAMEDSK) form a disordered region. The segment covering 3286 to 3295 (QKKDAMEDSK) has biased composition (basic and acidic residues).

It in the N-terminal section; belongs to the CdiA toxin family. Probably interacts with cognate immunity protein CdiI.

Its subcellular location is the membrane. The protein localises to the target cell. It localises to the target cell cytoplasm. In terms of biological role, toxic component of a toxin-immunity protein module, which functions as a cellular contact-dependent growth inhibition (CDI) system. CDI modules allow bacteria to communicate with and inhibit the growth of closely related neighboring bacteria in a contact-dependent fashion. CDI is neutralized by its cognate immunity protein CdiI, but not by non-cognate CdiI from other bacteria. The CdiA protein is thought to be exported from the cell through the central lumen of CdiB, the other half of its two-partner system (TPS). The TPS domain probably remains associated with CdiB while the FHA-1 domain forms an extended filament with the receptor-binding domain (RBD) at its extremity; in the secretion arrested state the C-terminus of the RBD and YP domains form a hairpin-like structure as the FHA-2, PT and CT domains are periplasmic. The YP domain is probably responsible for this arrest at the point where it re-enters the host cell periplasm. Upon binding to a target cell outer membrane receptor a signal is transmitted to activate secretion. The filament elongates slightly, the rest of CdiA is secreted and the FHA-2 domain becomes stably associated with the target cell's outer membrane where it facilitates entry of the toxic CT domain into the target cell periplasm. From there the toxic CT domain is cleaved and gains access to the target cell cytoplasm via an inner membrane protein. In Yersinia pestis, this protein is Toxin CdiA.